The chain runs to 94 residues: Small ribosomal subunit protein uS19 (94 aa).

It belongs to the universal ribosomal protein uS19 family.

Its function is as follows. Protein S19 forms a complex with S13 that binds strongly to the 16S ribosomal RNA. This Natranaerobius thermophilus (strain ATCC BAA-1301 / DSM 18059 / JW/NM-WN-LF) protein is Small ribosomal subunit protein uS19.